A 212-amino-acid polypeptide reads, in one-letter code: High frequency lysogenization protein HflD homolog (212 aa).

This sequence belongs to the HflD family.

The protein resides in the cytoplasm. The protein localises to the cell inner membrane. The protein is High frequency lysogenization protein HflD homolog of Stutzerimonas stutzeri (strain A1501) (Pseudomonas stutzeri).